Reading from the N-terminus, the 569-residue chain is uncharacterized protein (569 aa).

Residues 1–24 form the signal peptide; sequence MKFQRKYWGLLSTLGVSSAVALSA. Cys-25 is lipidated: N-palmitoyl cysteine. Cys-25 carries the S-diacylglycerol cysteine lipid modification. Disordered regions lie at residues 111-137 and 242-267; these read SNMK…EWEV and GKNG…KKIE. Low complexity-rich tracts occupy residues 119–130 and 249–260; these read SSSSSSTGNNGS and KKMTTDSSSTQQ.

To M.pneumoniae MPN_456 and M.genitalium MG321 N-terminal region.

The protein resides in the cell membrane. This is an uncharacterized protein from Mycoplasma pneumoniae (strain ATCC 29342 / M129 / Subtype 1) (Mycoplasmoides pneumoniae).